A 215-amino-acid polypeptide reads, in one-letter code: Thiamine-phosphate synthase (215 aa).

Residues 43–47 (QLRDK) and N75 each bind 4-amino-2-methyl-5-(diphosphooxymethyl)pyrimidine. Residues D76 and D95 each contribute to the Mg(2+) site. S114 is a 4-amino-2-methyl-5-(diphosphooxymethyl)pyrimidine binding site. 141 to 143 (TPT) provides a ligand contact to 2-[(2R,5Z)-2-carboxy-4-methylthiazol-5(2H)-ylidene]ethyl phosphate. Residue K144 coordinates 4-amino-2-methyl-5-(diphosphooxymethyl)pyrimidine. Residue G172 coordinates 2-[(2R,5Z)-2-carboxy-4-methylthiazol-5(2H)-ylidene]ethyl phosphate.

Belongs to the thiamine-phosphate synthase family. The cofactor is Mg(2+).

The enzyme catalyses 2-[(2R,5Z)-2-carboxy-4-methylthiazol-5(2H)-ylidene]ethyl phosphate + 4-amino-2-methyl-5-(diphosphooxymethyl)pyrimidine + 2 H(+) = thiamine phosphate + CO2 + diphosphate. It carries out the reaction 2-(2-carboxy-4-methylthiazol-5-yl)ethyl phosphate + 4-amino-2-methyl-5-(diphosphooxymethyl)pyrimidine + 2 H(+) = thiamine phosphate + CO2 + diphosphate. It catalyses the reaction 4-methyl-5-(2-phosphooxyethyl)-thiazole + 4-amino-2-methyl-5-(diphosphooxymethyl)pyrimidine + H(+) = thiamine phosphate + diphosphate. Its pathway is cofactor biosynthesis; thiamine diphosphate biosynthesis; thiamine phosphate from 4-amino-2-methyl-5-diphosphomethylpyrimidine and 4-methyl-5-(2-phosphoethyl)-thiazole: step 1/1. Functionally, condenses 4-methyl-5-(beta-hydroxyethyl)thiazole monophosphate (THZ-P) and 2-methyl-4-amino-5-hydroxymethyl pyrimidine pyrophosphate (HMP-PP) to form thiamine monophosphate (TMP). The protein is Thiamine-phosphate synthase of Streptomyces avermitilis (strain ATCC 31267 / DSM 46492 / JCM 5070 / NBRC 14893 / NCIMB 12804 / NRRL 8165 / MA-4680).